Reading from the N-terminus, the 465-residue chain is MQHFFTTFSTEGSKISLEALLNAREERAILQQQLITQYGQTLLCITLTAMGGVKKNALLDYVFTKALENLTALFTQLNITAVKEIIRPLETGHEAYFVLPIDARTLKVLMIELEESIPLARLWDLDVFNAKGNLLSRTDFDLSPRTCLVCGENAKICARTHKHEIDEIVDKIQSLAQNHDFAEHIGEQVYLALIQEARLSPKPGLVDAINNGSHKDMNLHTFEQSAISLKPFFTQFVLKGMMTAHLSENQILSEIRPLGLLAEKAMFKVTDGVNTHKGAIFSFGLVCTAIGRLLAQKSLVQSAVDFDVKLICSLVAQFTQGLTDELKNYPEHLPSTAGVRLFQKYGLTGVRGEAENGFNLIQTLLPQFDEYHQLEWEHRLLILLLNLMAINSDTNVVHRGGLAGLYFIQQTAQDLLTDQHLVTDKTALTQALMKFDTACIERNLSSGGSADLLALTIFFLSFRGN.

Positions 1–182 (MQHFFTTFST…QSLAQNHDFA (182 aa)) are apo-citrate lyase phosphoribosyl-dephospho-CoA transferase. Residues 183 to 465 (EHIGEQVYLA…TIFFLSFRGN (283 aa)) are 2-(5''-triphosphoribosyl)-3'-dephosphocoenzyme-A synthase.

It in the N-terminal section; belongs to the CitX family. The protein in the C-terminal section; belongs to the CitG/MdcB family.

The catalysed reaction is apo-[citrate lyase ACP] + 2'-(5''-triphospho-alpha-D-ribosyl)-3'-dephospho-CoA = holo-[citrate lyase ACP] + diphosphate. The enzyme catalyses 3'-dephospho-CoA + ATP = 2'-(5''-triphospho-alpha-D-ribosyl)-3'-dephospho-CoA + adenine. Bifunctional enzyme that catalyzes formation of 2-(5''-triphosphoribosyl)-3'-dephosphocoenzyme-A, and then the transfer of this prosthetic group precursor to the apo-acyl carrier protein (gamma chain) of the citrate lyase to yield the holo-acyl carrier protein. The sequence is that of Protein CitXG (citXG) from Haemophilus influenzae (strain ATCC 51907 / DSM 11121 / KW20 / Rd).